Here is a 95-residue protein sequence, read N- to C-terminus: Osteocalcin-related protein (95 aa).

Positions 1–23 are cleaved as a signal peptide; it reads MRTLSLLTLLALAALCLSDLTDA. Residues 24-49 constitute a propeptide that is removed on maturation; sequence TPTGPESDKAFMSKQEGNKVVNRLRR. The 47-residue stretch at 46 to 92 folds into the Gla domain; the sequence is RLRRYLGASVPSPDPLEPTRELCELDPACDELSNQYGLKTAYRRIYG. Glutamate 62, glutamate 66, glutamate 69, and aspartate 75 together coordinate Ca(2+). 2 positions are modified to 4-carboxyglutamate: glutamate 66 and glutamate 69. Cysteines 68 and 74 form a disulfide.

It belongs to the osteocalcin/matrix Gla protein family. Gamma-carboxyglutamic acid residues are formed by vitamin K dependent carboxylation. These residues are essential for the binding of calcium. Expressed in kidney and lung, but not in bone.

The protein resides in the secreted. Binds strongly to apatite and calcium. The polypeptide is Osteocalcin-related protein (Mus musculus (Mouse)).